The primary structure comprises 416 residues: 3-oxoacyl-[acyl-carrier-protein] synthase 2 (416 aa).

A Ketosynthase family 3 (KS3) domain is found at 6 to 414 (KKRVVVTGLG…GHNVTLAFKK (409 aa)). Residues Cys167, His307, and His344 each act as for beta-ketoacyl synthase activity in the active site.

Belongs to the thiolase-like superfamily. Beta-ketoacyl-ACP synthases family. As to quaternary structure, homodimer.

The catalysed reaction is a fatty acyl-[ACP] + malonyl-[ACP] + H(+) = a 3-oxoacyl-[ACP] + holo-[ACP] + CO2. It carries out the reaction (9Z)-hexadecenoyl-[ACP] + malonyl-[ACP] + H(+) = 3-oxo-(11Z)-octadecenoyl-[ACP] + holo-[ACP] + CO2. The protein operates within lipid metabolism; fatty acid biosynthesis. Its function is as follows. Involved in the type II fatty acid elongation cycle. Catalyzes the elongation of a wide range of acyl-ACP by the addition of two carbons from malonyl-ACP to an acyl acceptor. Can efficiently catalyze the conversion of palmitoleoyl-ACP (cis-hexadec-9-enoyl-ACP) to cis-vaccenoyl-ACP (cis-octadec-11-enoyl-ACP), an essential step in the thermal regulation of fatty acid composition. The polypeptide is 3-oxoacyl-[acyl-carrier-protein] synthase 2 (fabF) (Synechocystis sp. (strain ATCC 27184 / PCC 6803 / Kazusa)).